The following is a 526-amino-acid chain: GMP synthase [glutamine-hydrolyzing] (526 aa).

In terms of domain architecture, Glutamine amidotransferase type-1 spans 4–204 (KIVVLDFGSQ…AHAICGCSGD (201 aa)). The active-site Nucleophile is cysteine 87. Active-site residues include histidine 178 and glutamate 180. A GMPS ATP-PPase domain is found at 205-401 (WTPASFVEEQ…LDVPDPIVGR (197 aa)). 232–238 (SGGVDSS) contributes to the ATP binding site.

Homodimer.

The enzyme catalyses XMP + L-glutamine + ATP + H2O = GMP + L-glutamate + AMP + diphosphate + 2 H(+). It functions in the pathway purine metabolism; GMP biosynthesis; GMP from XMP (L-Gln route): step 1/1. Its function is as follows. Catalyzes the synthesis of GMP from XMP. This Salinibacter ruber (strain DSM 13855 / M31) protein is GMP synthase [glutamine-hydrolyzing].